The primary structure comprises 625 residues: MATSPSSCDCLVGVPTGPTLASTCGGSAFMLFMGLLEVFIRSQCDLEDPCGRASTRFRSEPDYEYDFIVIGGGSAGSVVASRLSEVPQWKVLLIEAGGDEPVGAQIPSMFLNFIGSDIDYRYNTEPERMACLSSMEQRCYWPRGKVLGGTSVMNGMMYIRGNREDYDDWAAQGNPGWSYQDVLPFFKKSEDNLELDAVGTEYHAKGGLLPVGKFPYNPPLSYALLKAGEEMGFSVQDLNGQNSTGFMIAQMTARNGIRYSSARAFLRPARMRNNLHILLNTTVTKVLIHPGTKNVVGVEVSDQFGSMRKILVKKEVIVSGGAVNSPQILLLSGVGPKEDLQKVNVRPVHHLPGVGKNLHNHVAYFTNFFIDDADTAPLNWATAMEYLLFRDGLMSGTGISDVTAKMATRWADRPNLPDLQLYFGGYLASCARTGQVGELLSNNSRAIQIFPAVLNPKSRGYITLRSADPLDPPRIFANYLTDERDVKTLVEGIKFAIRLSQTSPLKQYGMRLDKTVVKGCESHAFASDAYWECAVRQNTGPENHQAGSCKMGPSHDPMAVVNHELRVHGVRGLRVMDTSIMPKVTAGNTHAPAVMIAEKGAYLLKRAWGAKVURVDATWTLHRVI.

Residues 1-42 (MATSPSSCDCLVGVPTGPTLASTCGGSAFMLFMGLLEVFIRS) form the signal peptide. FAD is bound at residue 66–95 (DFIVIGGGSAGSVVASRLSEVPQWKVLLIE). Residue H544 is the Proton acceptor of the active site. A non-standard amino acid (selenocysteine) is located at residue U613.

Belongs to the GMC oxidoreductase family. Requires FAD as cofactor.

It localises to the secreted. The enzyme catalyses a quinone + D-glucose = D-glucono-1,5-lactone + a quinol. This Drosophila pseudoobscura pseudoobscura (Fruit fly) protein is Glucose dehydrogenase [FAD, quinone] (Gld).